The following is a 90-amino-acid chain: Small ribosomal subunit protein bS18 (90 aa).

Belongs to the bacterial ribosomal protein bS18 family. Part of the 30S ribosomal subunit. Forms a tight heterodimer with protein bS6.

Binds as a heterodimer with protein bS6 to the central domain of the 16S rRNA, where it helps stabilize the platform of the 30S subunit. In Polynucleobacter asymbioticus (strain DSM 18221 / CIP 109841 / QLW-P1DMWA-1) (Polynucleobacter necessarius subsp. asymbioticus), this protein is Small ribosomal subunit protein bS18.